The primary structure comprises 96 residues: UPF0235 protein YggU (96 aa).

The protein belongs to the UPF0235 family.

In Salmonella newport (strain SL254), this protein is UPF0235 protein YggU.